Here is a 124-residue protein sequence, read N- to C-terminus: MPTIQQLVRLRRIQITKKTKSPALVNCPQRRGVCTRVYTTTPKKPNSAIRKVARVRLTSGFEVTAYIPGEGHNLQEHSVVLIRGGRVKDLPGVRYHIVRGALDSGGVKDRTQRRSKYGVKKPKS.

A disordered region spans residues 104-124; sequence SGGVKDRTQRRSKYGVKKPKS. Over residues 113–124 the composition is skewed to basic residues; sequence RRSKYGVKKPKS.

Belongs to the universal ribosomal protein uS12 family. Part of the 30S ribosomal subunit.

The protein resides in the plastid. It localises to the chloroplast. With S4 and S5 plays an important role in translational accuracy. Located at the interface of the 30S and 50S subunits. The sequence is that of Small ribosomal subunit protein uS12c (rps12) from Thalassiosira pseudonana (Marine diatom).